Here is a 518-residue protein sequence, read N- to C-terminus: Myosin-binding protein 7 (518 aa).

A GTD-binding domain is found at 69–167; sequence NELELLRETV…ALTFEAQAYK (99 aa). A disordered region spans residues 276–350; that stretch reads VVGQSPRHQR…DSSEIGDNDM (75 aa). The span at 291–301 shows a compositional bias: low complexity; it reads STGSASSLLGT. A compositionally biased stretch (polar residues) spans 310–320; that stretch reads SNDSPRSNNGS. At serine 385 the chain carries Phosphoserine. Positions 399 to 431 form a coiled coil; sequence EISKLYMRLQALEADRESMRQAIMSMRTEKAQM. A helical transmembrane segment spans residues 458–477; the sequence is IIGAFNFISVFKWITSFVFW.

As to quaternary structure, interacts with myosin XI-I.

The protein localises to the endomembrane system. Its function is as follows. Membrane-anchored myosin receptors that define a distinct, plant-specific transport vesicle compartment. The chain is Myosin-binding protein 7 from Arabidopsis thaliana (Mouse-ear cress).